The following is a 75-amino-acid chain: DNA-directed RNA polymerase subunit epsilon (75 aa).

This sequence belongs to the RNA polymerase subunit epsilon family. In terms of assembly, RNAP is composed of a core of 2 alpha, a beta and a beta' subunit. The core is associated with a delta subunit, and at least one of epsilon or omega. When a sigma factor is associated with the core the holoenzyme is formed, which can initiate transcription.

It carries out the reaction RNA(n) + a ribonucleoside 5'-triphosphate = RNA(n+1) + diphosphate. Functionally, a non-essential component of RNA polymerase (RNAP). The protein is DNA-directed RNA polymerase subunit epsilon of Lactobacillus gasseri (strain ATCC 33323 / DSM 20243 / BCRC 14619 / CIP 102991 / JCM 1131 / KCTC 3163 / NCIMB 11718 / NCTC 13722 / AM63).